Consider the following 116-residue polypeptide: uncharacterized protein (116 aa).

Residues 58–78 (IIVDFKFIFQIFLILSFGFFA) traverse the membrane as a helical segment.

The protein resides in the membrane. This is an uncharacterized protein from Rickettsia prowazekii (strain Madrid E).